Consider the following 340-residue polypeptide: MKKKLLVLTMSTLFATQIMNSNHAKASVTESVDKKFVVPESGINKIIPAYDEFKNSPKVNVSNLTDNKNFVASEDKLNKIADSSAASKIVDKNFVVPESKLGNIVPEYKEINNRVNVATNNPASQQVDKHFVAKGPEVNRFITQNKVNHHFITTQTHYKKVITSYKSTHVHKHVNHAKDSINKHFIVKPSESPRYTHPSQSLIIKHHFAVPGYHAHKFVTPGHASIKINHFCVVPQINSFKVIPPYGHNSHRMHVPSFQNNTTATHQNAKVNKAYDYKYFYSYKVVKGVKKYFSFSQSNGYKIGKPSLNIKNVNYQYAVPSYSPTHYVPEFKGSLPAPRV.

The N-terminal stretch at 1–26 (MKKKLLVLTMSTLFATQIMNSNHAKA) is a signal peptide.

The protein localises to the cell surface. Functionally, adhesin that binds to the host cell extracellular matrix proteins fibronectin, fibrinogen, collagen, and vitronectin. This chain is Extracellular matrix protein-binding protein emp (emp), found in Staphylococcus aureus (strain USA300).